Consider the following 832-residue polypeptide: Mucosa-associated lymphoid tissue lymphoma translocation protein 1 homolog (832 aa).

Residues 1 to 39 (MSLWGQPLQASPPLAVRQPPTASSGPSTSPPAGATLNRL) are disordered. Serine 2 bears the N-acetylserine mark. Residues 19–39 (PPTASSGPSTSPPAGATLNRL) show a composition bias toward low complexity. The 88-residue stretch at 45-132 (RRLSESLDRA…EVLPLLNPPG (88 aa)) folds into the Death domain. Ig-like C2-type domains follow at residues 131-207 (PGLK…FEFS) and 218-314 (AEVT…KKAE). At serine 141 the chain carries Phosphoserine. 2 disulfides stabilise this stretch: cysteine 154-cysteine 196 and cysteine 257-cysteine 299. A caspase-like region spans residues 356 to 570 (IGNMSYWEHP…SLSEKRALTD (215 aa)). Positions 377–384 (LTNLLRQL) match the Nuclear export signal motif. Residues histidine 423 and cysteine 472 contribute to the active site.

This sequence belongs to the peptidase C14B family. As to quaternary structure, homooligomer; forms oligomers which bind to TRAF6. Forms a complex with CARD14 and MALT1; resulting in the formation of a CBM (CARD14-BCL10-MALT1) complex. Forms a complex with CARD11 and MALT1; resulting in the formation of a CBM (CARD11-BCL10-MALT1) complex. Forms a complex with CARD9 and MALT1; resulting in the formation of a CBM (CARD9-BCL10-MALT1) complex.

It is found in the cytoplasm. The protein localises to the perinuclear region. The protein resides in the nucleus. In terms of biological role, protease that enhances BCL10-induced activation: acts via formation of CBM complexes that channel adaptive and innate immune signaling downstream of CARD domain-containing proteins (CARD9, CARD11 and CARD14) to activate NF-kappa-B and MAP kinase p38 pathways which stimulate expression of genes encoding pro-inflammatory cytokines and chemokines. Mediates BCL10 cleavage: MALT1-dependent BCL10 cleavage plays an important role in T-cell antigen receptor-induced integrin adhesion. Involved in the induction of T helper 17 cells (Th17) differentiation. Cleaves RC3H1 and ZC3H12A in response to T-cell receptor (TCR) stimulation which releases their cooperatively repressed targets to promote Th17 cell differentiation. Also mediates cleavage of N4BP1 in T-cells following TCR-mediated activation, leading to N4BP1 inactivation. May also have ubiquitin ligase activity: binds to TRAF6, inducing TRAF6 oligomerization and activation of its ligase activity. This Mus musculus (Mouse) protein is Mucosa-associated lymphoid tissue lymphoma translocation protein 1 homolog.